A 313-amino-acid polypeptide reads, in one-letter code: Protein FixB (313 aa).

Leucine 255 to aspartate 283 is an FAD binding site.

The protein belongs to the ETF alpha-subunit/FixB family. As to quaternary structure, heterodimer of FixA and FixB.

Its pathway is amine and polyamine metabolism; carnitine metabolism. In terms of biological role, required for anaerobic carnitine reduction. May bring reductant to CaiA. The chain is Protein FixB from Escherichia coli (strain 55989 / EAEC).